Reading from the N-terminus, the 276-residue chain is Chymotrypsin (276 aa).

The first 16 residues, 1-16, serve as a signal peptide directing secretion; that stretch reads MKVALVVLALFGVSLA. Positions 17–45 are cleaved as a propeptide — activation peptide; it reads ASIDNIEIPPSKNIYVEPINQPEVDPSLE. Residues 46 to 272 enclose the Peptidase S1 domain; the sequence is IVNGQEVVPH…YLNWLQTHSE (227 aa). Cys-74 and Cys-90 are oxidised to a cystine. Active-site charge relay system residues include His-89 and Asp-135. Residues Asn-144 and Asn-193 are each glycosylated (N-linked (GlcNAc...) asparagine). Cystine bridges form between Cys-202–Cys-215 and Cys-225–Cys-250. Catalysis depends on Ser-229, which acts as the Charge relay system.

Belongs to the peptidase S1 family. Expressed in larval carcasses and gut, and adult gut.

Its subcellular location is the secreted. The protein localises to the extracellular space. The catalysed reaction is Preferential cleavage: Tyr-|-Xaa, Trp-|-Xaa, Phe-|-Xaa, Leu-|-Xaa.. Its function is as follows. Serine protease with chymotryptic and collagenolytic activities. The protein is Chymotrypsin of Phaedon cochleariae (Mustard beetle).